Here is a 215-residue protein sequence, read N- to C-terminus: BAG family molecular chaperone regulator 5, mitochondrial (215 aa).

The N-terminal 14 residues, 1 to 14 (MKRSRKFSSSTTTT), are a transit peptide targeting the mitochondrion. Positions 50-79 (ATAAAARIQSGYRSYRIRNLYKKISSINRE) constitute an IQ domain. One can recognise a BAG domain in the interval 72–149 (KISSINREAN…GMQEILDSIS (78 aa)).

Binds to the ATPase domain of HSP70/HSC70 chaperones. Interacts with HSP70-1.

It is found in the mitochondrion. Functionally, co-chaperone that regulates diverse cellular pathways, such as programmed cell death and stress responses. The chain is BAG family molecular chaperone regulator 5, mitochondrial (BAG5) from Arabidopsis thaliana (Mouse-ear cress).